The sequence spans 455 residues: MSTPTTNSVDTPLPGNGPSTPSSSPGGKEDGPEPCPGGADPDVPSTDGADSASVVVILDTAEEPERKRKKGPAPKMLGDELCQVCGDTASGFHYNVLSCEGCKGFFRRSVIRGGAGRYACRGGGTCQMDAFMRRKCQQCRLRKCKEAGMREQCVLSKEQIRKKKIRKQQQQQQQQSSPTGPGVSSSSPASGPGASPGGSDGGGQGSGEGEGVQLTAAQELMIQQLVAAQLQCNKRSFSDQPKVTPWPLGADPQSRDARQQRFAHFTELAIISVQEIVDFAKQVPGFLQLGREDQIALLKASTIEIMLLETARRYNHETECITFLKDFTYSKDDFHRAGLQVEFINPIFEFSRAMRRLGLDDAEYALLIAINIFSADRPNVQEPSRVEALQQPYVDALLSYTRIKRPQDQLRFPRMLMKLVSLRTLSSVHSEQVFALRLQDKKLPPLLSEIWDVHE.

The span at 1 to 10 (MSTPTTNSVD) shows a compositional bias: polar residues. The segment at 1–53 (MSTPTTNSVDTPLPGNGPSTPSSSPGGKEDGPEPCPGGADPDVPSTDGADSAS) is disordered. The interval 1–80 (MSTPTTNSVD…GPAPKMLGDE (80 aa)) is transactivation AF-1; required for ligand-independent transactivation function. A compositionally biased stretch (low complexity) spans 14–26 (PGNGPSTPSSSPG). Positions 79–156 (DELCQVCGDT…AGMREQCVLS (78 aa)) form a DNA-binding region, nuclear receptor. 2 NR C4-type zinc fingers span residues 82–102 (CQVCGDTASGFHYNVLSCEGC) and 120–144 (CRGGGTCQMDAFMRRKCQQCRLRKC). Residues 164-210 (KIRKQQQQQQQQSSPTGPGVSSSSPASGPGASPGGSDGGGQGSGEGE) are disordered. Residues 168–193 (QQQQQQQQSSPTGPGVSSSSPASGPG) show a composition bias toward low complexity. Residues 194 to 210 (ASPGGSDGGGQGSGEGE) show a composition bias toward gly residues. Residues 214 to 455 (LTAAQELMIQ…LLSEIWDVHE (242 aa)) are transactivation AF-2; required for ligand-dependent transactivation function; mediates interaction with CCAR2. The NR LBD domain occupies 217–455 (AQELMIQQLV…LLSEIWDVHE (239 aa)). Glycyl lysine isopeptide (Lys-Gly) (interchain with G-Cter in SUMO2) cross-links involve residues Lys-404 and Lys-442.

Belongs to the nuclear hormone receptor family. NR1 subfamily. In terms of assembly, forms a heterodimer with RXR. Interacts with CCAR2 (via N-terminus) in a ligand-independent manner. Interacts (when sumoylated) with GPS2; interaction with GPS2 onto hepatic acute phase protein promoters prevents N-Cor corepressor complex dissociation. Interacts with ABCA12 and ABCA1; this interaction is required for ABCA1 localization to the cell surface and is necessary for its normal activity and stability. Post-translationally, sumoylated by SUMO2 at Lys-404 and Lys-442 during the hepatic acute phase response, leading to promote interaction with GPS2 and prevent N-Cor corepressor complex dissociation.

The protein resides in the nucleus. Its function is as follows. Nuclear receptor that exhibits a ligand-dependent transcriptional activation activity. Binds preferentially to double-stranded oligonucleotide direct repeats having the consensus half-site sequence 5'-AGGTCA-3' and 4-nt spacing (DR-4). Regulates cholesterol uptake through MYLIP-dependent ubiquitination of LDLR, VLDLR and LRP8; DLDLR and LRP8. Interplays functionally with RORA for the regulation of genes involved in liver metabolism. Induces LPCAT3-dependent phospholipid remodeling in endoplasmic reticulum (ER) membranes of hepatocytes, driving SREBF1 processing and lipogenesis. Via LPCAT3, triggers the incorporation of arachidonate into phosphatidylcholines of ER membranes, increasing membrane dynamics and enabling triacylglycerols transfer to nascent very low-density lipoprotein (VLDL) particles. Via LPCAT3 also counteracts lipid-induced ER stress response and inflammation, likely by modulating SRC kinase membrane compartmentalization and limiting the synthesis of lipid inflammatory mediators. Plays an anti-inflammatory role during the hepatic acute phase response by acting as a corepressor: inhibits the hepatic acute phase response by preventing dissociation of the N-Cor corepressor complex. The protein is Oxysterols receptor LXR-beta (NR1H2) of Bos taurus (Bovine).